A 424-amino-acid polypeptide reads, in one-letter code: Probable ribonuclease FAU-1 (424 aa).

This sequence belongs to the FAU-1 family.

Probable RNase involved in rRNA stability through maturation and/or degradation of precursor rRNAs. Binds to RNA in loop regions with AU-rich sequences. The polypeptide is Probable ribonuclease FAU-1 (Saccharolobus islandicus (strain M.16.27) (Sulfolobus islandicus)).